Reading from the N-terminus, the 294-residue chain is Pyridoxal 5'-phosphate synthase subunit PdxS (294 aa).

D24 contributes to the D-ribose 5-phosphate binding site. The active-site Schiff-base intermediate with D-ribose 5-phosphate is K81. Residue G153 participates in D-ribose 5-phosphate binding. Position 165 (R165) interacts with D-glyceraldehyde 3-phosphate. D-ribose 5-phosphate-binding positions include G214 and G235–S236.

It belongs to the PdxS/SNZ family. As to quaternary structure, in the presence of PdxT, forms a dodecamer of heterodimers.

The enzyme catalyses aldehydo-D-ribose 5-phosphate + D-glyceraldehyde 3-phosphate + L-glutamine = pyridoxal 5'-phosphate + L-glutamate + phosphate + 3 H2O + H(+). It participates in cofactor biosynthesis; pyridoxal 5'-phosphate biosynthesis. Functionally, catalyzes the formation of pyridoxal 5'-phosphate from ribose 5-phosphate (RBP), glyceraldehyde 3-phosphate (G3P) and ammonia. The ammonia is provided by the PdxT subunit. Can also use ribulose 5-phosphate and dihydroxyacetone phosphate as substrates, resulting from enzyme-catalyzed isomerization of RBP and G3P, respectively. The sequence is that of Pyridoxal 5'-phosphate synthase subunit PdxS from Geobacillus thermodenitrificans (strain NG80-2).